The primary structure comprises 155 residues: uncharacterized protein (155 aa).

The protein belongs to the IIV-6 145L family.

This is an uncharacterized protein from Acheta domesticus (House cricket).